The following is a 617-amino-acid chain: Elongation factor 4 (617 aa).

The 182-residue stretch at 17-198 (AIIRNFCIIA…KIVRDLPAPV (182 aa)) folds into the tr-type G domain. GTP-binding positions include 29–34 (DHGKST) and 145–148 (NKID).

It belongs to the TRAFAC class translation factor GTPase superfamily. Classic translation factor GTPase family. LepA subfamily.

The protein resides in the cell membrane. It carries out the reaction GTP + H2O = GDP + phosphate + H(+). In terms of biological role, required for accurate and efficient protein synthesis under certain stress conditions. May act as a fidelity factor of the translation reaction, by catalyzing a one-codon backward translocation of tRNAs on improperly translocated ribosomes. Back-translocation proceeds from a post-translocation (POST) complex to a pre-translocation (PRE) complex, thus giving elongation factor G a second chance to translocate the tRNAs correctly. Binds to ribosomes in a GTP-dependent manner. This chain is Elongation factor 4, found in Paenarthrobacter aurescens (strain TC1).